The following is a 208-amino-acid chain: LexA repressor (208 aa).

Positions 28–48 (RAEIARQLGFRSANAAEEHLK) form a DNA-binding region, H-T-H motif. Catalysis depends on for autocatalytic cleavage activity residues Ser125 and Lys162.

This sequence belongs to the peptidase S24 family. Homodimer.

It carries out the reaction Hydrolysis of Ala-|-Gly bond in repressor LexA.. In terms of biological role, represses a number of genes involved in the response to DNA damage (SOS response), including recA and lexA. In the presence of single-stranded DNA, RecA interacts with LexA causing an autocatalytic cleavage which disrupts the DNA-binding part of LexA, leading to derepression of the SOS regulon and eventually DNA repair. This is LexA repressor from Alteromonas mediterranea (strain DSM 17117 / CIP 110805 / LMG 28347 / Deep ecotype).